A 463-amino-acid polypeptide reads, in one-letter code: MMEVGILPVHVLYVFFIGAIILFMLLRKDTTFISLFGIFIISLWASHSLSASVSSLFHSFIYAAGELLPTIFIICFIVSMSDLLTKTGINEAMISPFASLVRGPVTAYWLIGGLMFAISLFFWPSPGVALIGAVLLPAAARAGLTPLAAAMAMNLFGHGFALSGDFVIQAAPKLTADAAGIPVGDVVSASIPLVLIMGVTTTTAAFIMIQRERKKQEHPTSFSPVLSGEQDNSLYLPKRLRSILAFLIPLAFLADIACMLLFNLQGNDATALIGGSAICILFTVHFFVYKHKGLEKITGYFIDGFKFGFKVFGPVIPIAAFFYLGDSGYESILGTSLPKGSHGIVNDLGIALSHMMPMSKELAATALTAAGAITGLDGSGFSGISLAGSIAKLFSSALHADPAILTALGQISAIWVGGGTLVPWALIPAAAICKVDPFELARKNFIPVAIGLLVTTLAAVMML.

Transmembrane regions (helical) follow at residues 6–26 (ILPV…FMLL), 31–51 (TFIS…SLSA), 60–80 (FIYA…IVSM), 101–123 (VRGP…LFFW), 130–152 (LIGA…AAMA), 189–209 (ASIP…FIMI), 242–262 (SILA…MLLF), 269–289 (ATAL…FFVY), 304–324 (GFKF…FFYL), 413–433 (AIWV…AAIC), and 443–463 (KNFI…VMML).

It localises to the cell membrane. This is an uncharacterized protein from Bacillus subtilis (strain 168).